The primary structure comprises 86 residues: MDSYSIIIKPHVTEKTMNLIDKNNEITFVVKRDANKGQIKRAFEELYEEKVARVTTHITPRGNKVAFIKLVEEEMAEELAVKIGVF.

This sequence belongs to the universal ribosomal protein uL23 family. As to quaternary structure, part of the 50S ribosomal subunit. Contacts protein L29.

Binds to 23S rRNA. One of the proteins that surrounds the polypeptide exit tunnel on the outside of the ribosome. This is Large ribosomal subunit protein uL23 from Methanobrevibacter smithii (strain ATCC 35061 / DSM 861 / OCM 144 / PS).